We begin with the raw amino-acid sequence, 105 residues long: Thioredoxin (105 aa).

The Thioredoxin domain maps to 2–103; it reads VKQIESKSAF…KEKLEATIKG (102 aa). Lysine 3 carries the post-translational modification N6-acetyllysine. At lysine 8 the chain carries N6-succinyllysine. Active-site nucleophile residues include cysteine 32 and cysteine 35. Cysteine 32 and cysteine 35 are joined by a disulfide. Lysine 39 carries the N6-acetyllysine modification. S-nitrosocysteine is present on residues cysteine 62 and cysteine 69. At cysteine 73 the chain carries S-nitrosocysteine; alternate. At lysine 94 the chain carries N6-acetyllysine; alternate. The residue at position 94 (lysine 94) is an N6-succinyllysine; alternate.

This sequence belongs to the thioredoxin family. Homodimer; disulfide-linked. Interacts with TXNIP through the redox-active site. Interacts with MAP3K5 and CASP3. Interacts with APEX1; the interaction stimulates the FOS/JUN AP-1 DNA-binding activity in a redox-dependent manner. In the fully reduced protein, both Cys-69 and Cys-73 are nitrosylated in response to nitric oxide (NO). When two disulfide bonds are present in the protein, only Cys-73 is nitrosylated. Cys-73 can serve as donor for nitrosylation of target proteins.

The protein localises to the nucleus. Its subcellular location is the cytoplasm. The protein resides in the secreted. Functionally, participates in various redox reactions through the reversible oxidation of its active center dithiol to a disulfide and catalyzes dithiol-disulfide exchange reactions. Plays a role in the reversible S-nitrosylation of cysteine residues in target proteins, and thereby contributes to the response to intracellular nitric oxide. Nitrosylates the active site Cys of CASP3 in response to nitric oxide (NO), and thereby inhibits caspase-3 activity. Induces the FOS/JUN AP-1 DNA binding activity in ionizing radiation (IR) cells through its oxidation/reduction status and stimulates AP-1 transcriptional activity. The chain is Thioredoxin (TXN) from Equus caballus (Horse).